A 192-amino-acid polypeptide reads, in one-letter code: Phosphoheptose isomerase (192 aa).

The SIS domain occupies 34 to 192 (VVDAYRAGNK…VERELFLKGN (159 aa)). 49-51 (NGG) serves as a coordination point for substrate. Positions 58 and 62 each coordinate Zn(2+). Substrate-binding positions include glutamate 62, 91–92 (ND), 117–119 (STS), serine 122, and glutamine 169. Positions 169 and 177 each coordinate Zn(2+).

It belongs to the SIS family. GmhA subfamily. In terms of assembly, homotetramer. The cofactor is Zn(2+).

The protein resides in the cytoplasm. It carries out the reaction 2 D-sedoheptulose 7-phosphate = D-glycero-alpha-D-manno-heptose 7-phosphate + D-glycero-beta-D-manno-heptose 7-phosphate. It functions in the pathway carbohydrate biosynthesis; D-glycero-D-manno-heptose 7-phosphate biosynthesis; D-glycero-alpha-D-manno-heptose 7-phosphate and D-glycero-beta-D-manno-heptose 7-phosphate from sedoheptulose 7-phosphate: step 1/1. In terms of biological role, catalyzes the isomerization of sedoheptulose 7-phosphate in D-glycero-D-manno-heptose 7-phosphate. The sequence is that of Phosphoheptose isomerase from Geobacter sp. (strain M21).